A 186-amino-acid polypeptide reads, in one-letter code: UPF0301 protein CV_3909 (186 aa).

It belongs to the UPF0301 (AlgH) family.

In Chromobacterium violaceum (strain ATCC 12472 / DSM 30191 / JCM 1249 / CCUG 213 / NBRC 12614 / NCIMB 9131 / NCTC 9757 / MK), this protein is UPF0301 protein CV_3909.